Reading from the N-terminus, the 466-residue chain is Asparagine--tRNA ligase (466 aa).

It belongs to the class-II aminoacyl-tRNA synthetase family. Homodimer.

The protein resides in the cytoplasm. The enzyme catalyses tRNA(Asn) + L-asparagine + ATP = L-asparaginyl-tRNA(Asn) + AMP + diphosphate + H(+). The polypeptide is Asparagine--tRNA ligase (Shigella dysenteriae serotype 1 (strain Sd197)).